Consider the following 183-residue polypeptide: Adenine phosphoribosyltransferase (183 aa).

This sequence belongs to the purine/pyrimidine phosphoribosyltransferase family. In terms of assembly, homodimer.

It localises to the cytoplasm. It carries out the reaction AMP + diphosphate = 5-phospho-alpha-D-ribose 1-diphosphate + adenine. It functions in the pathway purine metabolism; AMP biosynthesis via salvage pathway; AMP from adenine: step 1/1. Catalyzes a salvage reaction resulting in the formation of AMP, that is energically less costly than de novo synthesis. The chain is Adenine phosphoribosyltransferase from Klebsiella pneumoniae (strain 342).